Reading from the N-terminus, the 230-residue chain is Ribonuclease 3 (230 aa).

One can recognise an RNase III domain in the interval 5–125; sequence YSRFYNILGY…VIGAIYLDSD (121 aa). Glu-40 contributes to the Mg(2+) binding site. The active site involves Asp-44. The Mg(2+) site is built by Asp-111 and Glu-114. Glu-114 is a catalytic residue. The 71-residue stretch at 153 to 223 folds into the DRBM domain; that stretch reads DSKSKLQEIL…AEKMIEMLSQ (71 aa).

Belongs to the ribonuclease III family. In terms of assembly, homodimer. Requires Mg(2+) as cofactor.

It localises to the cytoplasm. The catalysed reaction is Endonucleolytic cleavage to 5'-phosphomonoester.. Its function is as follows. Digests double-stranded RNA. Involved in the processing of primary rRNA transcript to yield the immediate precursors to the large and small rRNAs (23S and 16S). Processes some mRNAs, and tRNAs when they are encoded in the rRNA operon. Processes pre-crRNA and tracrRNA of type II CRISPR loci if present in the organism. The protein is Ribonuclease 3 of Francisella tularensis subsp. holarctica (strain OSU18).